Reading from the N-terminus, the 235-residue chain is Phosphoribosylaminoimidazole-succinocarboxamide synthase (235 aa).

Belongs to the SAICAR synthetase family.

It catalyses the reaction 5-amino-1-(5-phospho-D-ribosyl)imidazole-4-carboxylate + L-aspartate + ATP = (2S)-2-[5-amino-1-(5-phospho-beta-D-ribosyl)imidazole-4-carboxamido]succinate + ADP + phosphate + 2 H(+). It participates in purine metabolism; IMP biosynthesis via de novo pathway; 5-amino-1-(5-phospho-D-ribosyl)imidazole-4-carboxamide from 5-amino-1-(5-phospho-D-ribosyl)imidazole-4-carboxylate: step 1/2. The chain is Phosphoribosylaminoimidazole-succinocarboxamide synthase from Sulfolobus acidocaldarius (strain ATCC 33909 / DSM 639 / JCM 8929 / NBRC 15157 / NCIMB 11770).